Consider the following 91-residue polypeptide: DNA-directed RNA polymerase subunit omega (91 aa).

Belongs to the RNA polymerase subunit omega family. In terms of assembly, the RNAP catalytic core consists of 2 alpha, 1 beta, 1 beta' and 1 omega subunit. When a sigma factor is associated with the core the holoenzyme is formed, which can initiate transcription.

The enzyme catalyses RNA(n) + a ribonucleoside 5'-triphosphate = RNA(n+1) + diphosphate. Promotes RNA polymerase assembly. Latches the N- and C-terminal regions of the beta' subunit thereby facilitating its interaction with the beta and alpha subunits. The sequence is that of DNA-directed RNA polymerase subunit omega from Serratia proteamaculans (strain 568).